Consider the following 164-residue polypeptide: MALNLQDKKAIVAEVNEAASGALSAVVADSRGVPVAAMTVLRKQAREAGVYMKVVRNTLARRAVEGTEYECLTDTFTGPSLLAFSNEHPGAAARLFKDFAKENKDFEIKAAAFEGAVTDADVLATLPTYDEAIARLMMCMKEASAGKLVRTIAAVRDQKEEAAA.

The protein belongs to the universal ribosomal protein uL10 family. As to quaternary structure, part of the ribosomal stalk of the 50S ribosomal subunit. The N-terminus interacts with L11 and the large rRNA to form the base of the stalk. The C-terminus forms an elongated spine to which L12 dimers bind in a sequential fashion forming a multimeric L10(L12)X complex.

In terms of biological role, forms part of the ribosomal stalk, playing a central role in the interaction of the ribosome with GTP-bound translation factors. The protein is Large ribosomal subunit protein uL10 of Aliivibrio fischeri (strain MJ11) (Vibrio fischeri).